Reading from the N-terminus, the 657-residue chain is Probable cytochrome P450 556A1 (657 aa).

Residues 2–24 traverse the membrane as a helical segment; sequence FLTSILYTIIIILIFYKGLEYLI. The tract at residues 440 to 486 is disordered; that stretch reads RSLPSINNNNNNNNNNNNNNNNNNNNNNNNNSNNNSINGNNKNNNRN. Residues 446–486 are compositionally biased toward low complexity; sequence NNNNNNNNNNNNNNNNNNNNNNNNNSNNNSINGNNKNNNRN. Position 587 (cysteine 587) interacts with heme.

The protein belongs to the cytochrome P450 family. Heme serves as cofactor.

The protein localises to the membrane. The sequence is that of Probable cytochrome P450 556A1 (cyp556A1) from Dictyostelium discoideum (Social amoeba).